Consider the following 351-residue polypeptide: Probable RNA methyltransferase BAV1540 (351 aa).

The Proton acceptor role is filled by E90. The 227-residue stretch at 93 to 319 (LLPRDGLCVS…VKVRNSAGQD (227 aa)) folds into the Radical SAM core domain. An intrachain disulfide couples C100 to C324. [4Fe-4S] cluster is bound by residues C107, C111, and C114. S-adenosyl-L-methionine contacts are provided by residues 152–153 (GE), S182, 205–207 (SLH), and N281. C324 functions as the S-methylcysteine intermediate in the catalytic mechanism.

This sequence belongs to the radical SAM superfamily. RlmN family. [4Fe-4S] cluster is required as a cofactor.

The protein resides in the cytoplasm. The sequence is that of Probable RNA methyltransferase BAV1540 from Bordetella avium (strain 197N).